The chain runs to 564 residues: Ferric reductase transmembrane component 1 (564 aa).

Residue N4 is glycosylated (N-linked (GlcNAc...) asparagine). 2 helical membrane passes run 10–30 and 73–93; these read TVIA…MFWL and VILT…FIGM. N-linked (GlcNAc...) asparagine glycosylation is present at N111. Residues 117-137 form a helical membrane-spanning segment; sequence VAARLGFLACGLYVTSYFFSI. Positions 121-254 constitute a Ferric oxidoreductase domain; sequence LGFLACGLYV…VYMKVCVAVY (134 aa). Residues H157 and H171 each contribute to the heme site. Helical transmembrane passes span 160 to 180 and 193 to 213; these read LSQY…GLAA and IIGY…LPFF. H225 and H239 together coordinate heme. Positions 255 to 410 constitute an FAD-binding FR-type domain; the sequence is VFDRGCRMLR…DGPYGPVSNP (156 aa). N268 carries N-linked (GlcNAc...) asparagine glycosylation. Position 317–323 (317–323) interacts with FAD; it reads HPFTIAS. N360 is a glycosylation site (N-linked (GlcNAc...) asparagine). 3 positions are modified to phosphoserine: S362, S381, and S383. A helical transmembrane segment spans residues 417–437; that stretch reads LFLFAGGVGVSYILPIILDTI. 419–427 is an NAD(+) binding site; it reads LFAGGVGVS. The N-linked (GlcNAc...) asparagine glycan is linked to N501.

It belongs to the ferric reductase (FRE) family. It depends on FAD as a cofactor. The cofactor is heme.

It is found in the cell membrane. It catalyses the reaction 2 a Fe(II)-siderophore + NADP(+) + H(+) = 2 a Fe(III)-siderophore + NADPH. Metalloreductase responsible for reducing extracellular iron and copper prior to import. Catalyzes the reductive uptake of Fe(3+)-salts and Fe(3+) bound to catecholate or hydroxamate siderophores. Fe(3+) is reduced to Fe(2+), which then dissociates from the siderophore and can be imported by the high-affinity Fe(2+) transport complex in the plasma membrane. Also participates in Cu(2+) reduction and Cu(+) uptake. This chain is Ferric reductase transmembrane component 1 (frp1), found in Schizosaccharomyces pombe (strain 972 / ATCC 24843) (Fission yeast).